Reading from the N-terminus, the 223-residue chain is Probable transaldolase (223 aa).

Lys-91 (schiff-base intermediate with substrate) is an active-site residue.

Belongs to the transaldolase family. Type 3B subfamily.

It localises to the cytoplasm. It catalyses the reaction D-sedoheptulose 7-phosphate + D-glyceraldehyde 3-phosphate = D-erythrose 4-phosphate + beta-D-fructose 6-phosphate. Its pathway is carbohydrate degradation; pentose phosphate pathway; D-glyceraldehyde 3-phosphate and beta-D-fructose 6-phosphate from D-ribose 5-phosphate and D-xylulose 5-phosphate (non-oxidative stage): step 2/3. Functionally, transaldolase is important for the balance of metabolites in the pentose-phosphate pathway. The chain is Probable transaldolase from Prosthecochloris aestuarii (strain DSM 271 / SK 413).